Reading from the N-terminus, the 516-residue chain is Probable 2-methylcitrate dehydratase (516 aa).

Belongs to the PrpD family.

It catalyses the reaction (2S,3S)-2-methylcitrate = 2-methyl-cis-aconitate + H2O. It participates in organic acid metabolism; propanoate degradation. Functionally, catalyzes the stereospecific dehydration of (2S,3S)-2-methylcitrate (2-MC) to yield the cis isomer of 2-methyl-aconitate. This is Probable 2-methylcitrate dehydratase (PDH1) from Saccharomyces cerevisiae (strain ATCC 204508 / S288c) (Baker's yeast).